A 927-amino-acid chain; its full sequence is MLEKTYDAKTVEPKIAKVWEEADAFRAGAGAEEGAEAFTIVIPPPNVTGSLHMGHALNNTLQDILVRFERMRGKNVLWQPGMDHAGIATQMVVERQLMEKQIHRRDLTREQFIEKVWEWKAESGGTIFNQLKRLGASADWSRERFTMDEGLSKAVLEVFVTLYKEGLIYKDKRLVNWDPRLLTAISDLEVEQHEVNGNLWHFRYPLEGETFDPENPKTFITVATTRPETMLGDTAVAVHPDDERYRHLVGKNVVLPIVGRKIPVVADEYSDPEKGSGAVKITPAHDFNDFEVGKRHKLPAINILTVEAAIKLKDNEDFLAGLDATPERQAVWDELDGLDRFVARKKIVELMEEGGFLEKVEPHRHAVPHGDRGGVPIEPFLTEQWYANAAELAKPAIASVREGRTNFVPKNWEKTYFDWMENIQPWCISRQLWWGHQIPAWYGPDGRVFVEKTEEEALSAAIEYYLALEGPWKAWVEDRLENFQPGEILTRDEDVLDTWFSSALWPFSTLGWPDQTPELKTYYQTDVLVTGFDIIFFWVARMMMMGLHFMDEEPFHTVYVHALVRDKNGAKMSKSKGNVIDPLDLIDEYGADALRFTLTVMAAQGRDVKLDPARIAGYRNFGTKLWNATRFAEMNEVARNDDFWLNDAKLAVNRWILTELTRAARQITDGITSYRFNEAAGAAYRFVWNLFCDWYLELLKPVFMGTDEAAKAESRACVAFVLDEIYKLLHPMMPFMTEELWAQTAGEGKERESLLCHAAWPSPDFEDDEAAADINWLVDLVSGIRSVRSEMNVPPAAIAPLVVVGANGVTRERLVRQDSAIKRLARVGDISLADAAPKGSAQIVLNEATICLPLGSLIDLAAEAARLQKELAKVTEEIARLHKKLSNERFVASAPAEIVEAEREKLAEYRDAQDKLAVALTRVRDAG.

A 'HIGH' region motif is present at residues 45–55 (PNVTGSLHMGH). The 'KMSKS' region motif lies at 571–575 (KMSKS). Position 574 (Lys574) interacts with ATP. Residues 856–917 (SLIDLAAEAA…EYRDAQDKLA (62 aa)) are a coiled coil.

It belongs to the class-I aminoacyl-tRNA synthetase family. ValS type 1 subfamily. As to quaternary structure, monomer.

The protein localises to the cytoplasm. It carries out the reaction tRNA(Val) + L-valine + ATP = L-valyl-tRNA(Val) + AMP + diphosphate. Functionally, catalyzes the attachment of valine to tRNA(Val). As ValRS can inadvertently accommodate and process structurally similar amino acids such as threonine, to avoid such errors, it has a 'posttransfer' editing activity that hydrolyzes mischarged Thr-tRNA(Val) in a tRNA-dependent manner. This chain is Valine--tRNA ligase, found in Mesorhizobium japonicum (strain LMG 29417 / CECT 9101 / MAFF 303099) (Mesorhizobium loti (strain MAFF 303099)).